The following is a 548-amino-acid chain: MSNKPFIYQAPFPMGKDNTEYYLLTSDYVSVADFDGETILKVEPEALTLLAQQAFHDASFMLRPAHQKQVAAILHDPEASENDKYVALQFLRNSEIAAKGVLPTCQDTGTAIIVGKKGQRVWTGGGDEETLSKGVYNTYIEDNLRYSQNAALDMYKEVNTGTNLPAQIDLYAVDGDEYKFLCVAKGGGSANKTYLYQETKALLTPGKLKNFLVEKMRTLGTAACPPYHIAFVIGGTSAETNLKTVKLASAHYYDELPTEGNEHGQAFRDVQLEQELLEEAQKLGLGAQFGGKYFAHDIRVIRLPRHGASCPVGMGVSCSADRNIKAKINREGIWIEKLEHNPGQYIPQELRQAGEGEAVKVDLNRPMKEILAQLSQYPVSTRLSLTGTIIVGRDIAHAKLKELIDAGKELPQYIKDHPIYYAGPAKTPAGYPSGSLGPTTAGRMDSYVDLLQSHGGSMIMLAKGNRSQQVTDACHKHGGFYLGSIGGPAAVLAQQSIKHLECVAYPELGMEAIWKIEVEDFPAFILVDDKGNDFFQQIVNKQCANCTK.

A [4Fe-4S] cluster-binding site is contributed by cysteine 105. Lysine 192 bears the N6-acetyllysine mark. Cysteine 224 and cysteine 318 together coordinate [4Fe-4S] cluster.

The protein belongs to the class-I fumarase family. In terms of assembly, homodimer. The cofactor is [4Fe-4S] cluster.

The enzyme catalyses (S)-malate = fumarate + H2O. It carries out the reaction (S,S)-tartrate = oxaloacetate + H2O. Its function is as follows. Catalyzes the reversible hydration of fumarate to (S)-malate. Functions in the generation of fumarate for use as an anaerobic electron acceptor. To a lesser extent, also displays D-tartrate dehydratase activity, but is not able to convert (R)-malate, L-tartrate or meso-tartrate. Is required for anaerobic growth on D-tartrate. This is Fumarate hydratase class I, anaerobic from Escherichia coli (strain K12).